A 365-amino-acid polypeptide reads, in one-letter code: Protein RecA (365 aa).

73–80 (GPESSGKT) contributes to the ATP binding site.

This sequence belongs to the RecA family.

It is found in the cytoplasm. Can catalyze the hydrolysis of ATP in the presence of single-stranded DNA, the ATP-dependent uptake of single-stranded DNA by duplex DNA, and the ATP-dependent hybridization of homologous single-stranded DNAs. It interacts with LexA causing its activation and leading to its autocatalytic cleavage. The chain is Protein RecA from Prochlorococcus marinus (strain MIT 9301).